A 498-amino-acid chain; its full sequence is Angiopoietin-1 (498 aa).

Residues 1 to 19 (MTVFLSFAFLAAILTHIGC) form the signal peptide. Asn92, Asn122, Asn154, Asn243, and Asn295 each carry an N-linked (GlcNAc...) asparagine glycan. Positions 158–254 (RLEIQLLENS…SVLQKQQLEL (97 aa)) form a coiled coil. In terms of domain architecture, Fibrinogen C-terminal spans 277 to 497 (KEEVKPFRDC…STTMMIRPLD (221 aa)). 2 disulfides stabilise this stretch: Cys286–Cys315 and Cys439–Cys452.

Homooligomer. Interacts with TEK/TIE2. Interacts with SVEP1/polydom. Interacts with THBD; this interaction significantly inhibits the generation of activated PC and TAFIa/CPB2 by the thrombin/thrombomodulin complex.

Its subcellular location is the secreted. Its function is as follows. Binds and activates TIE2 receptor by inducing its tyrosine phosphorylation. Implicated in endothelial developmental processes later and distinct from that of VEGF. Appears to play a crucial role in mediating reciprocal interactions between the endothelium and surrounding matrix and mesenchyme. Mediates blood vessel maturation/stability. It may play an important role in the heart early development. This Sus scrofa (Pig) protein is Angiopoietin-1 (ANGPT1).